The sequence spans 130 residues: Small ribosomal subunit protein uS9 (130 aa).

The disordered stretch occupies residues 105–130; the sequence is TRDSRMKERKKPGLRGARRAPQFSKR. A compositionally biased stretch (basic residues) spans 111–130; it reads KERKKPGLRGARRAPQFSKR.

It belongs to the universal ribosomal protein uS9 family.

The sequence is that of Small ribosomal subunit protein uS9 from Lysinibacillus sphaericus (strain C3-41).